We begin with the raw amino-acid sequence, 555 residues long: Urocanate hydratase (555 aa).

NAD(+)-binding positions include 51–52 (GG), Gln-129, 175–177 (GMG), Glu-195, Arg-200, 241–242 (NA), 262–266 (QTSAH), 272–273 (YL), and Tyr-321. Cys-409 is a catalytic residue. An NAD(+)-binding site is contributed by Gly-491.

It belongs to the urocanase family. The cofactor is NAD(+).

The protein localises to the cytoplasm. It carries out the reaction 4-imidazolone-5-propanoate = trans-urocanate + H2O. The protein operates within amino-acid degradation; L-histidine degradation into L-glutamate; N-formimidoyl-L-glutamate from L-histidine: step 2/3. Catalyzes the conversion of urocanate to 4-imidazolone-5-propionate. This chain is Urocanate hydratase, found in Rhizorhabdus wittichii (strain DSM 6014 / CCUG 31198 / JCM 15750 / NBRC 105917 / EY 4224 / RW1) (Sphingomonas wittichii).